The sequence spans 333 residues: Neuropeptides B/W receptor type 2 (333 aa).

At 1-45 the chain is on the extracellular side; it reads MQAAGHPEPLDSRGSFSLPTMGANVSQDNGTGHNATFSEPLPFLY. Residues asparagine 24, asparagine 29, and asparagine 34 are each glycosylated (N-linked (GlcNAc...) asparagine). A helical membrane pass occupies residues 46-69; it reads VLLPAVYSGICAVGLTGNTAVILV. Over 70–80 the chain is Cytoplasmic; the sequence is ILRAPKMKTVT. The chain crosses the membrane as a helical span at residues 81–105; it reads NVFILNLAVADGLFTLVLPVNIAEH. The Extracellular portion of the chain corresponds to 106 to 120; the sequence is LLQYWPFGELLCKLV. Cysteines 117 and 197 form a disulfide. A helical membrane pass occupies residues 121-140; it reads LAVDHYNIFSSIYFLAVMSV. The Cytoplasmic portion of the chain corresponds to 141 to 165; it reads DRYLVVLATVRSRHMPWRTYRGAKV. Residues 166–185 traverse the membrane as a helical segment; the sequence is ASLCVWLGVTVLVLPFFSFA. The Extracellular portion of the chain corresponds to 186-211; the sequence is GVYSNELQVPSCGLSFPWPEQVWFKA. The helical transmembrane segment at 212–233 threads the bilayer; that stretch reads SRVYTLVLGFVLPVCTICVLYT. Over 234–257 the chain is Cytoplasmic; sequence DLLRRLRAVRLRSGAKALGKARRK. Residues 258 to 282 form a helical membrane-spanning segment; it reads VTVLVLVVLAVCLLCWTPFHLASVV. Topologically, residues 283 to 292 are extracellular; it reads ALTTDLPQTP. The chain crosses the membrane as a helical span at residues 293–307; sequence LVISMSYVITSLSYA. Residues 308–333 are Cytoplasmic-facing; it reads NSCLNPFLYAFLDDNFRKNFRSILRC.

This sequence belongs to the G-protein coupled receptor 1 family. In terms of tissue distribution, detected at high levels in caudate nucleus, hippocampus and amygdala; at moderate levels in the adult brain, thalamus, parietal cortex, pituitary gland, adrenal gland and lymph nodes.

Its subcellular location is the cell membrane. In terms of biological role, interacts specifically with a number of opioid ligands. Receptor for neuropeptides B and W, which may be involved in neuroendocrine system regulation, food intake and the organization of other signals. This is Neuropeptides B/W receptor type 2 (NPBWR2) from Homo sapiens (Human).